The following is a 176-amino-acid chain: Protein MAL2 (176 aa).

Topologically, residues 1-34 are cytoplasmic; the sequence is MSAGGASVPPPPNPAVSFPPPRVTLPAGPDILRT. Residues 31–175 form the MARVEL domain; that stretch reads ILRTYSGAFV…SLGLALRRWR (145 aa). The chain crosses the membrane as a helical span at residues 35–55; the sequence is YSGAFVCLEILFGGLVWILVA. The Lumenal portion of the chain corresponds to 56-66; that stretch reads SSNVPLPLLQG. A helical membrane pass occupies residues 67–87; the sequence is WVMFVSVTAFFFSLLFLGMFL. Over 88–102 the chain is Cytoplasmic; it reads SGMVAQIDANWNFLD. Residues 103-123 traverse the membrane as a helical segment; the sequence is FAYHFTVFVFYFGAFLLEAAA. At 124-149 the chain is on the lumenal side; it reads TSLHDLHCNTTITGQPLLSDNQYNIN. Asn132 carries an N-linked (GlcNAc...) asparagine glycan. A helical transmembrane segment spans residues 150-170; it reads VAASIFAFMTTACYGCSLGLA. At 171 to 176 the chain is on the cytoplasmic side; sequence LRRWRP.

This sequence belongs to the MAL family. In terms of assembly, interacts with TPD52L2. Predominantly expressed in kidney, lung, and liver. Also found in thyroid gland, stomach and, at lower levels in testis and small intestine.

It localises to the cell membrane. The protein localises to the apical cell membrane. Its subcellular location is the endomembrane system. The protein resides in the cytoplasm. It is found in the perinuclear region. Functionally, member of the machinery of polarized transport. Required for the indirect transcytotic route at the step of the egress of the transcytosing cargo from perinuclear endosomes in order for it to travel to the apical surface via a raft-dependent pathway. The polypeptide is Protein MAL2 (MAL2) (Homo sapiens (Human)).